A 57-amino-acid polypeptide reads, in one-letter code: Large ribosomal subunit protein bL32 (57 aa).

Residues 1 to 21 form a disordered region; that stretch reads MAVQQRRSSKHRRDKRRSHDA. Residues 7-18 show a composition bias toward basic residues; it reads RSSKHRRDKRRS.

It belongs to the bacterial ribosomal protein bL32 family.

This is Large ribosomal subunit protein bL32 (rpmF) from Mycoplasma pneumoniae (strain ATCC 29342 / M129 / Subtype 1) (Mycoplasmoides pneumoniae).